The sequence spans 211 residues: Uracil phosphoribosyltransferase (211 aa).

Residues Arg-78, Arg-103, and 130-138 contribute to the 5-phospho-alpha-D-ribose 1-diphosphate site; that span reads DPMLATGSS. Residues Ile-193 and 198–200 contribute to the uracil site; that span reads GDA. Position 199 (Asp-199) interacts with 5-phospho-alpha-D-ribose 1-diphosphate.

It belongs to the UPRTase family. Mg(2+) serves as cofactor.

The catalysed reaction is UMP + diphosphate = 5-phospho-alpha-D-ribose 1-diphosphate + uracil. It functions in the pathway pyrimidine metabolism; UMP biosynthesis via salvage pathway; UMP from uracil: step 1/1. Allosterically activated by GTP. Catalyzes the conversion of uracil and 5-phospho-alpha-D-ribose 1-diphosphate (PRPP) to UMP and diphosphate. This chain is Uracil phosphoribosyltransferase, found in Acinetobacter baylyi (strain ATCC 33305 / BD413 / ADP1).